Consider the following 118-residue polypeptide: Probable non-functional immunoglobulin lambda variable 1-50 (118 aa).

The first 19 residues, 1-19 (MAWSSLLLTLLAHCTGSWA), serve as a signal peptide directing secretion. The framework-1 stretch occupies residues 20 to 44 (QSVLTQPPSVSGAPGQRVTISCTGS). In terms of domain architecture, Ig-like spans 20 to 118 (QSVLTQPPSV…CKAWDNSLNA (99 aa)). A disulfide bridge connects residues C41 and C109. Positions 45 to 53 (SSNIGAGYV) are complementarity-determining-1. The segment at 54 to 70 (VHWYQQLPGTAPKLLIY) is framework-2. The complementarity-determining-2 stretch occupies residues 71 to 73 (GNS). A framework-3 region spans residues 74-109 (NRPSGVPDQFSGSKSGTSASLAITGLQSEDEADYYC). The interval 110–118 (KAWDNSLNA) is complementarity-determining-3.

As to quaternary structure, immunoglobulins are composed of two identical heavy chains and two identical light chains; disulfide-linked.

It is found in the secreted. It localises to the cell membrane. In terms of biological role, probable non-functional open reading frame (ORF) of V region of the variable domain of immunoglobulin light chains. Non-functional ORF generally cannot participate in the synthesis of a productive immunoglobulin chain due to altered V-(D)-J or switch recombination and/or splicing site (at mRNA level) and/or conserved amino acid change (protein level). Immunoglobulins, also known as antibodies, are membrane-bound or secreted glycoproteins produced by B lymphocytes. In the recognition phase of humoral immunity, the membrane-bound immunoglobulins serve as receptors which, upon binding of a specific antigen, trigger the clonal expansion and differentiation of B lymphocytes into immunoglobulins-secreting plasma cells. Secreted immunoglobulins mediate the effector phase of humoral immunity, which results in the elimination of bound antigens. The antigen binding site is formed by the variable domain of one heavy chain, together with that of its associated light chain. Thus, each immunoglobulin has two antigen binding sites with remarkable affinity for a particular antigen. The variable domains are assembled by a process called V-(D)-J rearrangement and can then be subjected to somatic hypermutations which, after exposure to antigen and selection, allow affinity maturation for a particular antigen. This chain is Probable non-functional immunoglobulin lambda variable 1-50, found in Homo sapiens (Human).